Consider the following 184-residue polypeptide: Ribosome maturation factor RimP (184 aa).

The protein belongs to the RimP family.

Its subcellular location is the cytoplasm. In terms of biological role, required for maturation of 30S ribosomal subunits. The protein is Ribosome maturation factor RimP of Zymomonas mobilis subsp. mobilis (strain ATCC 31821 / ZM4 / CP4).